We begin with the raw amino-acid sequence, 92 residues long: MSLRAVWHLGLLGSLVGAVLAATHRGPAANTTDPLTHAPVSPHPSPLGGFAVPLVVGGLCAVVLGAACLLELLRRTCRGWGRYHPYMDPVVV.

The signal sequence occupies residues 1–21 (MSLRAVWHLGLLGSLVGAVLA). Topologically, residues 22–49 (ATHRGPAANTTDPLTHAPVSPHPSPLGG) are extracellular. A glycan (N-linked (GlcNAc...) asparagine; by host) is linked at Asn30. Residues 50–70 (FAVPLVVGGLCAVVLGAACLL) form a helical membrane-spanning segment. Topologically, residues 71-92 (ELLRRTCRGWGRYHPYMDPVVV) are cytoplasmic.

Belongs to the alphaherpesvirinae glycoprotein J family.

It is found in the host Golgi apparatus membrane. It localises to the host endoplasmic reticulum membrane. The protein localises to the host endosome membrane. Inhibits host cell apoptosis. Induces an increase in reactive oxygen species (ROS) in the host cell. The protein is Envelope glycoprotein J (gJ) of Homo sapiens (Human).